We begin with the raw amino-acid sequence, 201 residues long: Probable GTP-binding protein EngB (201 aa).

Residues 22–197 form the EngB-type G domain; sequence TFPEYAFIGR…LNYIESINKE (176 aa). Residues 30–37, 57–61, 75–78, 142–145, and 175–178 each bind GTP; these read GRSNVGKS, GKTML, DLPG, TKAD, and ITSS. S37 and T59 together coordinate Mg(2+).

This sequence belongs to the TRAFAC class TrmE-Era-EngA-EngB-Septin-like GTPase superfamily. EngB GTPase family. Mg(2+) serves as cofactor.

Functionally, necessary for normal cell division and for the maintenance of normal septation. This is Probable GTP-binding protein EngB from Bacteroides fragilis (strain ATCC 25285 / DSM 2151 / CCUG 4856 / JCM 11019 / LMG 10263 / NCTC 9343 / Onslow / VPI 2553 / EN-2).